A 385-amino-acid chain; its full sequence is Selenoprotein P (385 aa).

An N-terminal signal peptide occupies residues 1–19; the sequence is MWRSLGLALALCLLPYGGA. Position 59 (Sec-59) is a non-standard amino acid, selenocysteine. The cysteinyl-selenocysteine (Sec-Cys); in isoform Se-P1 cross-link spans 59–62; it reads UYLC. N-linked (GlcNAc...) asparagine glycans are attached at residues Asn-83, Asn-174, and Asn-188. Intrachain disulfides connect Cys-168-Cys-186 and Cys-172-Cys-175. Residues 196 to 262 are disordered; sequence KTTEPSEEHN…KGQHRQGHLE (67 aa). A compositionally biased stretch (basic residues) spans 243 to 258; the sequence is LHHHHHHHKHKGQHRQ. Sec-264 is a non-standard amino acid (selenocysteine). Phosphoserine is present on Ser-269. Residues Sec-282, Sec-323, Sec-335, and Sec-357 are each a non-standard amino acid (selenocysteine). The interval 357–385 is disordered; sequence UHSQHVSPTEASPNUSUNNKTKKUKUNLN. Polar residues predominate over residues 360–369; the sequence is QHVSPTEASP. An O-linked (Hex...) threonine; partial glycan is attached at Thr-365. Residues Sec-371, Sec-373, Sec-380, and Sec-382 are each a non-standard amino acid (selenocysteine). The segment covering 376-385 has biased composition (basic residues); the sequence is KTKKUKUNLN.

The protein belongs to the selenoprotein P family. Post-translationally, isoform Se-P1 contains several disulfide bridges and a selenide-sulfide bond between Sec-59 and Cys-62. These bonds are speculated to serve as redox-active pairs. In terms of processing, phosphorylation sites are present in the extracellular medium. Widely expressed, mainly by the liver. Secreted in plasma.

It is found in the secreted. Functionally, might be responsible for some of the extracellular antioxidant defense properties of selenium or might be involved in the transport of selenium. May supply selenium to tissues such as brain and testis. The sequence is that of Selenoprotein P from Rattus norvegicus (Rat).